The chain runs to 356 residues: Nicotinate-nucleotide--dimethylbenzimidazole phosphoribosyltransferase (356 aa).

E317 (proton acceptor) is an active-site residue.

This sequence belongs to the CobT family. Homodimer.

It carries out the reaction 5,6-dimethylbenzimidazole + nicotinate beta-D-ribonucleotide = alpha-ribazole 5'-phosphate + nicotinate + H(+). Its pathway is nucleoside biosynthesis; alpha-ribazole biosynthesis; alpha-ribazole from 5,6-dimethylbenzimidazole: step 1/2. Its function is as follows. Catalyzes the synthesis of alpha-ribazole-5'-phosphate from nicotinate mononucleotide (NAMN) and 5,6-dimethylbenzimidazole (DMB). The sequence is that of Nicotinate-nucleotide--dimethylbenzimidazole phosphoribosyltransferase from Salmonella dublin (strain CT_02021853).